The chain runs to 630 residues: Sorting nexin-4 (630 aa).

Polar residues-rich tracts occupy residues 1-11 (MSSEDQFTSIQ) and 19-28 (NTNNTPTDTT). The disordered stretch occupies residues 1-143 (MSSEDQFTSI…QQPQQQLASI (143 aa)). A compositionally biased stretch (basic residues) spans 32-49 (KSSKSKKSKKSSSKKKNG). A compositionally biased stretch (low complexity) spans 50–60 (NKISPSSTTET). The span at 81–94 (DDNHEVDDGNKEQN) shows a compositional bias: basic and acidic residues. Low complexity predominate over residues 130 to 143 (QQQLQQPQQQLASI). The region spanning 187-321 (SIKTTVTHPN…HLFISNSNDW (135 aa)) is the PX domain. Positions 243, 269, and 288 each coordinate a 1,2-diacyl-sn-glycero-3-phospho-(1D-myo-inositol-3-phosphate). 2 coiled-coil regions span residues 361 to 413 (SKHK…SNQI) and 550 to 581 (TIKS…INEE).

Belongs to the sorting nexin family.

It is found in the cytoplasm. The protein resides in the cytosol. Its subcellular location is the preautophagosomal structure membrane. The protein localises to the endosome membrane. In terms of biological role, sorting nexin, involved in the separation or division of vacuoles throughout the entire life cycle of the cells. Involved in retrieval of late-Golgi SNAREs from post-Golgi endosomes to the trans-Golgi network, for cytoplasm to vacuole transport (Cvt), and autophagy of large cargos including mitophagy, pexophagy and glycophagy. In Candida albicans (strain SC5314 / ATCC MYA-2876) (Yeast), this protein is Sorting nexin-4 (SNX4).